Here is a 112-residue protein sequence, read N- to C-terminus: UPF0342 protein SPT_0901 (112 aa).

It belongs to the UPF0342 family.

This Streptococcus pneumoniae (strain Taiwan19F-14) protein is UPF0342 protein SPT_0901.